Consider the following 151-residue polypeptide: Ribosomal RNA large subunit methyltransferase H (151 aa).

Residues Leu73, Gly100, and 119–124 (LSKMTL) each bind S-adenosyl-L-methionine.

It belongs to the RNA methyltransferase RlmH family. As to quaternary structure, homodimer.

The protein localises to the cytoplasm. It carries out the reaction pseudouridine(1915) in 23S rRNA + S-adenosyl-L-methionine = N(3)-methylpseudouridine(1915) in 23S rRNA + S-adenosyl-L-homocysteine + H(+). Its function is as follows. Specifically methylates the pseudouridine at position 1915 (m3Psi1915) in 23S rRNA. In Campylobacter lari (strain RM2100 / D67 / ATCC BAA-1060), this protein is Ribosomal RNA large subunit methyltransferase H.